The chain runs to 65 residues: Large ribosomal subunit protein bL35 (65 aa).

A disordered region spans residues 1–22 (MPKMKTKSSAKKRFKVTGSGKI).

The protein belongs to the bacterial ribosomal protein bL35 family.

This chain is Large ribosomal subunit protein bL35, found in Flavobacterium johnsoniae (strain ATCC 17061 / DSM 2064 / JCM 8514 / BCRC 14874 / CCUG 350202 / NBRC 14942 / NCIMB 11054 / UW101) (Cytophaga johnsonae).